We begin with the raw amino-acid sequence, 105 residues long: MSKRDWLDFEHLVDDEVRDAIKPPSMYKVILVNDDYTPMEFVIDVLQKFFSYDVERATQLMLTVHYEGKAICGVFTAEVAETKVAMVNQYARENEHPLLCTLEKA.

It belongs to the ClpS family. Binds to the N-terminal domain of the chaperone ClpA.

Involved in the modulation of the specificity of the ClpAP-mediated ATP-dependent protein degradation. The sequence is that of ATP-dependent Clp protease adapter protein ClpS from Klebsiella pneumoniae (strain 342).